A 154-amino-acid chain; its full sequence is Protein AE7-like 1 (154 aa).

It belongs to the MIP18 family.

In terms of biological role, may play a role in chromosome segregation through establishment of sister chromatid cohesion. Unable to complement ae7 mutants, and thus probably not involved in the cytosolic iron-sulfur assembly (CIA) pathway. The sequence is that of Protein AE7-like 1 from Arabidopsis thaliana (Mouse-ear cress).